A 356-amino-acid polypeptide reads, in one-letter code: Butyrate kinase 2 (356 aa).

The protein belongs to the acetokinase family. In terms of assembly, homodimer.

Its subcellular location is the cytoplasm. It carries out the reaction butanoate + ATP = butanoyl phosphate + ADP. It participates in lipid metabolism; butanoate metabolism. Its function is as follows. Catalyzes the conversion of butyryl-CoA through butyryl phosphate to butyrate. In Clostridium acetobutylicum (strain ATCC 824 / DSM 792 / JCM 1419 / IAM 19013 / LMG 5710 / NBRC 13948 / NRRL B-527 / VKM B-1787 / 2291 / W), this protein is Butyrate kinase 2 (buk2).